A 192-amino-acid chain; its full sequence is Glutaredoxin-C9 (192 aa).

Positions Y89–W191 constitute a Glutaredoxin domain. A disulfide bond links C109 and C112. Residues A189–L192 carry the Responsive for interaction with TGA factors motif.

The protein belongs to the glutaredoxin family. CC-type subfamily.

The protein resides in the cytoplasm. The protein localises to the nucleus. Its function is as follows. Has a glutathione-disulfide oxidoreductase activity in the presence of NADPH and glutathione reductase. Reduces low molecular weight disulfides and proteins. This chain is Glutaredoxin-C9 (GRXC9), found in Oryza sativa subsp. japonica (Rice).